We begin with the raw amino-acid sequence, 205 residues long: Dephospho-CoA kinase (205 aa).

The DPCK domain occupies 3–204 (KVGLTGGIGA…HRAHQPGESQ (202 aa)). 11-16 (GAGKSE) serves as a coordination point for ATP.

This sequence belongs to the CoaE family.

The protein resides in the cytoplasm. The enzyme catalyses 3'-dephospho-CoA + ATP = ADP + CoA + H(+). Its pathway is cofactor biosynthesis; coenzyme A biosynthesis; CoA from (R)-pantothenate: step 5/5. Catalyzes the phosphorylation of the 3'-hydroxyl group of dephosphocoenzyme A to form coenzyme A. In Streptomyces avermitilis (strain ATCC 31267 / DSM 46492 / JCM 5070 / NBRC 14893 / NCIMB 12804 / NRRL 8165 / MA-4680), this protein is Dephospho-CoA kinase.